Consider the following 576-residue polypeptide: Cilia- and flagella-associated protein 100 (576 aa).

The segment at 1–29 is disordered; the sequence is MPIYDEASVPGTAAGRSTTDVGATAGANP. Coiled-coil stretches lie at residues 125–226, 254–311, and 342–408; these read IFLL…CRRY, VAEW…IMKE, and YKQL…LKDR. 3 disordered regions span residues 417–439, 495–519, and 538–563; these read TLSM…PGGP, AEKA…HREH, and TGKP…RNDE.

Belongs to the CFAP100 family. Interacts with FAP73; form the modifier of inner arm (MIA) complex.

The protein localises to the cytoplasm. It localises to the cytoskeleton. The protein resides in the flagellum axoneme. Functionally, as part of MIA, a complex associated with the outer doublet microtubules of the axoneme, may play a role in ciliary/flagellar motility by regulating the assembly and the activity of axonemal inner dynein arm. The sequence is that of Cilia- and flagella-associated protein 100 from Chlamydomonas reinhardtii (Chlamydomonas smithii).